Reading from the N-terminus, the 179-residue chain is MHTVLTRGNATVAYTLSVLACLTFSCFLSTVFLDYRTDANINTVRVLVKNVPDYGASREKHDLGFVTFDLQTNLTGIFNWNVKQLFLYLTAEYQTPANQLNQVVLWDKIILRGDNAVLDFKNMNTKYYFWDDGNGLKDNRNVSLYLSWNIIPNAGLLPSVQATGKHLFKFPADYATSSI.

At 1 to 12 the chain is on the cytoplasmic side; that stretch reads MHTVLTRGNATV. Residues 13–33 form a helical; Signal-anchor for type II membrane protein membrane-spanning segment; that stretch reads AYTLSVLACLTFSCFLSTVFL. Residues 34–179 lie on the Lumenal side of the membrane; sequence DYRTDANINT…FPADYATSSI (146 aa). Residues Asn-73 and Asn-141 are each glycosylated (N-linked (GlcNAc...) asparagine).

This sequence belongs to the SPCS3 family. As to quaternary structure, component of the signal peptidase complex (SPC) composed of a catalytic subunit twr/SEC11 and three accessory subunits Spase12/SPCS1, Spase25/SPCS2 and Spase22-23/SPCS3. The complex induces a local thinning of the ER membrane which is used to measure the length of the signal peptide (SP) h-region of protein substrates. This ensures the selectivity of the complex towards h-regions shorter than 18-20 amino acids.

It is found in the endoplasmic reticulum membrane. Essential component of the signal peptidase complex (SPC) which catalyzes the cleavage of N-terminal signal sequences from nascent proteins as they are translocated into the lumen of the endoplasmic reticulum. Essential for the SPC catalytic activity, possibly by stabilizing and positioning the active center of the complex close to the lumenal surface. In terms of biological role, (Microbial infection) Plays an important role in infection by flaviviruses such as West Nile virus and Dengue virus type 2. The protein is Signal peptidase complex subunit 3 (Spase22-23) of Drosophila melanogaster (Fruit fly).